We begin with the raw amino-acid sequence, 141 residues long: Hemoglobin subunit mu (141 aa).

The Globin domain occupies 1-141 (MLSAQERAQI…VAVVLTEKYR (141 aa)). The heme b site is built by His58 and His87.

Belongs to the globin family. Expressed in erythroid tissues.

The polypeptide is Hemoglobin subunit mu (HBM) (Homo sapiens (Human)).